The primary structure comprises 376 residues: MQSTSAQSSASHPERVFNFSAGPATMPESVLREVQDEMLCYPGAGASIMEISHRDKLFVDVLHDAESTIRELLNVSDDYSVMFMQGGATLQFSAIPANLLRGSGKRAQYVLTGSWGKKAVKEAKKEGDVDVLFDAAESNYDHIPSASDLACPDDAAYMYYCSNETIQGVQFPTEPNCPDSVPLVSDASSDFLCRPLPIEKYGLLYACAQKNAGPAGVSVVIMRKDLLDKADPNIPGYLHFKNHHDNDSEWNTPPTFAIYVLGKVARWLRDDMGGLEKMESINHEKSQQLYSVIDSSNGFYRGHAQTDCRSLMNVTFNLPSDELTAKFIAEAAEHKLAALKGHRSVGGIRASIYNAMPREGVNALASFMNNFASKNS.

Residue arginine 54 coordinates L-glutamate. Pyridoxal 5'-phosphate contacts are provided by residues 88–89 (AT), tryptophan 115, threonine 165, aspartate 186, and glutamine 209. The residue at position 210 (lysine 210) is an N6-(pyridoxal phosphate)lysine. 251–252 (NT) is a pyridoxal 5'-phosphate binding site.

It belongs to the class-V pyridoxal-phosphate-dependent aminotransferase family. SerC subfamily. In terms of assembly, homodimer. It depends on pyridoxal 5'-phosphate as a cofactor.

It is found in the cytoplasm. The enzyme catalyses O-phospho-L-serine + 2-oxoglutarate = 3-phosphooxypyruvate + L-glutamate. It catalyses the reaction 4-(phosphooxy)-L-threonine + 2-oxoglutarate = (R)-3-hydroxy-2-oxo-4-phosphooxybutanoate + L-glutamate. It participates in amino-acid biosynthesis; L-serine biosynthesis; L-serine from 3-phospho-D-glycerate: step 2/3. Its pathway is cofactor biosynthesis; pyridoxine 5'-phosphate biosynthesis; pyridoxine 5'-phosphate from D-erythrose 4-phosphate: step 3/5. Catalyzes the reversible conversion of 3-phosphohydroxypyruvate to phosphoserine and of 3-hydroxy-2-oxo-4-phosphonooxybutanoate to phosphohydroxythreonine. The chain is Phosphoserine aminotransferase from Rhodopirellula baltica (strain DSM 10527 / NCIMB 13988 / SH1).